The chain runs to 317 residues: 3'-5' exoribonuclease YhaM (317 aa).

Residues 17–90 (FLLIKESTRG…QLKILSIRLS (74 aa)) constitute a DNA-binding region (OB). One can recognise an HD domain in the interval 163 to 279 (HVVSMLAIGK…LHLIDLIDAK (117 aa)).

It belongs to the YhaM family.

Shows a 3'-5' exoribonuclease activity. The protein is 3'-5' exoribonuclease YhaM of Oceanobacillus iheyensis (strain DSM 14371 / CIP 107618 / JCM 11309 / KCTC 3954 / HTE831).